The primary structure comprises 590 residues: (-)-alpha-terpineol synthase (590 aa).

5 residues coordinate Mg(2+): Asp339, Asp343, Asp483, Thr487, and Glu491. The DDXXD motif motif lies at 339–343; that stretch reads DDVYD.

The protein belongs to the terpene synthase family. It depends on Mg(2+) as a cofactor.

It carries out the reaction (2E)-geranyl diphosphate + H2O = (S)-alpha-terpineol + diphosphate. It functions in the pathway secondary metabolite biosynthesis; terpenoid biosynthesis. Mediates the conversion of geranyl diphosphate into alpha-terpineol, a monoterpenol. Monoterpenols contribute to the final grape and wine aroma and flavor. Also forms some 1,8-cineole and traces of other monoterpenoids. The chain is (-)-alpha-terpineol synthase from Vitis vinifera (Grape).